A 90-amino-acid chain; its full sequence is Small ribosomal subunit protein uS15 (90 aa).

This sequence belongs to the universal ribosomal protein uS15 family. Part of the 30S ribosomal subunit. Forms a bridge to the 50S subunit in the 70S ribosome, contacting the 23S rRNA.

Its function is as follows. One of the primary rRNA binding proteins, it binds directly to 16S rRNA where it helps nucleate assembly of the platform of the 30S subunit by binding and bridging several RNA helices of the 16S rRNA. In terms of biological role, forms an intersubunit bridge (bridge B4) with the 23S rRNA of the 50S subunit in the ribosome. This chain is Small ribosomal subunit protein uS15, found in Wolbachia pipientis wMel.